The following is a 99-amino-acid chain: NADH-ubiquinone oxidoreductase chain 4L (99 aa).

The next 3 helical transmembrane spans lie at 5 to 25 (IITAYKIGTILFLIGILGFII), 30 to 50 (ILLLIISIEMTLLAISFIIIC), and 65 to 85 (LYILALAGSEAAIGLSLLVLF).

This sequence belongs to the complex I subunit 4L family.

It is found in the mitochondrion membrane. It carries out the reaction a ubiquinone + NADH + 5 H(+)(in) = a ubiquinol + NAD(+) + 4 H(+)(out). In terms of biological role, core subunit of the mitochondrial membrane respiratory chain NADH dehydrogenase (Complex I) that is believed to belong to the minimal assembly required for catalysis. Complex I functions in the transfer of electrons from NADH to the respiratory chain. The immediate electron acceptor for the enzyme is believed to be ubiquinone. The protein is NADH-ubiquinone oxidoreductase chain 4L (ND4L) of Allomyces macrogynus.